A 595-amino-acid polypeptide reads, in one-letter code: Aspartate--tRNA(Asp/Asn) ligase (595 aa).

Glutamate 175 is an L-aspartate binding site. Residues 199-202 form an aspartate region; the sequence is QQYK. 2 residues coordinate L-aspartate: arginine 221 and histidine 454. An ATP-binding site is contributed by 221–223; that stretch reads RDE. Glutamate 488 contributes to the ATP binding site. Arginine 495 serves as a coordination point for L-aspartate. Residue 540–543 coordinates ATP; the sequence is GIDR.

Belongs to the class-II aminoacyl-tRNA synthetase family. Type 1 subfamily. In terms of assembly, homodimer.

It is found in the cytoplasm. The catalysed reaction is tRNA(Asx) + L-aspartate + ATP = L-aspartyl-tRNA(Asx) + AMP + diphosphate. Functionally, aspartyl-tRNA synthetase with relaxed tRNA specificity since it is able to aspartylate not only its cognate tRNA(Asp) but also tRNA(Asn). Reaction proceeds in two steps: L-aspartate is first activated by ATP to form Asp-AMP and then transferred to the acceptor end of tRNA(Asp/Asn). This is Aspartate--tRNA(Asp/Asn) ligase from Agrobacterium fabrum (strain C58 / ATCC 33970) (Agrobacterium tumefaciens (strain C58)).